The primary structure comprises 231 residues: Potassium/proton antiporter CemA (231 aa).

4 consecutive transmembrane segments (helical) span residues 7–27, 104–124, 154–174, and 189–209; these read FIPL…SFTF, IHTI…SVYS, ILFL…ELMI, and IISF…KYWI.

The protein belongs to the CemA family.

It localises to the plastid. Its subcellular location is the chloroplast inner membrane. The enzyme catalyses K(+)(in) + H(+)(out) = K(+)(out) + H(+)(in). Its function is as follows. Contributes to K(+)/H(+) antiport activity by supporting proton efflux to control proton extrusion and homeostasis in chloroplasts in a light-dependent manner to modulate photosynthesis. Prevents excessive induction of non-photochemical quenching (NPQ) under continuous-light conditions. Indirectly promotes efficient inorganic carbon uptake into chloroplasts. This is Potassium/proton antiporter CemA from Pisum sativum (Garden pea).